Consider the following 552-residue polypeptide: Putative transport protein YE4162 (552 aa).

6 helical membrane passes run 1–21 (MSAIALTVSMLALVAVLGLWI), 26–46 (VYGVGLGIGGVLFGGIIVGHF), 65–85 (FGLILFVYTIGIQVGPGFFSS), 96–116 (FAILMVIVGGLVTAIIHKLFA), 119–139 (LPIILGVFSGAVTNTPALGAA), and 158–178 (MGYAMAYPFGICGILLVMWLI). RCK C-terminal domains lie at 192 to 276 (EFDS…VVGE) and 279 to 361 (DVTL…VVGN). A run of 6 helical transmembrane segments spans residues 371 to 391 (MLPVFIGVGLGVLLGSIPLFI), 393 to 413 (GFPAALRLGLAGGPLVVALIL), 439 to 459 (IVLFLSVVGLKSGGDFINTLV), 464 to 484 (LAWIGYGAMITGIPLLTVGIL), 493 to 513 (YLTLCGMLAGSMTDPPALAFA), and 530 to 550 (VYPLAMFLRIMSPQILAVLFW).

The protein belongs to the AAE transporter (TC 2.A.81) family. YidE subfamily.

The protein localises to the cell membrane. This Yersinia enterocolitica serotype O:8 / biotype 1B (strain NCTC 13174 / 8081) protein is Putative transport protein YE4162.